The primary structure comprises 101 residues: Large ribosomal subunit protein bL21 (101 aa).

Belongs to the bacterial ribosomal protein bL21 family. As to quaternary structure, part of the 50S ribosomal subunit. Contacts protein L20.

In terms of biological role, this protein binds to 23S rRNA in the presence of protein L20. The sequence is that of Large ribosomal subunit protein bL21 from Sulfurovum sp. (strain NBC37-1).